Here is a 77-residue protein sequence, read N- to C-terminus: uncharacterized protein (77 aa).

2 stretches are compositionally biased toward basic and acidic residues: residues 1–24 (CPVA…EDQR) and 37–58 (EGPK…ERGP). The interval 1–77 (CPVAEEHFLV…RHGPKRKPAK (77 aa)) is disordered. Residues 66-77 (RPRHGPKRKPAK) are compositionally biased toward basic residues.

This is an uncharacterized protein from Macaca fascicularis (Crab-eating macaque).